Reading from the N-terminus, the 195-residue chain is Putative kinase protein 143R (195 aa).

8–16 contacts ATP; sequence GIIGAGKST. Glu-31, Tyr-43, and Gln-54 together coordinate substrate. Glu-78 acts as the Proton acceptor in catalysis. Residues Arg-79 and Glu-142 each coordinate substrate.

The protein belongs to the DCK/DGK family.

This chain is Putative kinase protein 143R, found in Acheta domesticus (House cricket).